A 119-amino-acid polypeptide reads, in one-letter code: Beta-2-microglobulin (119 aa).

The first 20 residues, Met-1–Ala-20, serve as a signal peptide directing secretion. Residues Pro-25–Lys-114 enclose the Ig-like C1-type domain. Cys-45 and Cys-100 are joined by a disulfide.

It belongs to the beta-2-microglobulin family. As to quaternary structure, heterodimer of an alpha chain and a beta chain. Beta-2-microglobulin is the beta-chain of major histocompatibility complex class I molecules.

The protein localises to the secreted. In terms of biological role, component of the class I major histocompatibility complex (MHC). Involved in the presentation of peptide antigens to the immune system. In Cheracebus torquatus (Collared titi monkey), this protein is Beta-2-microglobulin (B2M).